We begin with the raw amino-acid sequence, 602 residues long: MEKAKDSLPTTGDPVPSQGTINPVDETGGSASDEKKAKKGCDFWFTFSSLVLTAFLSALEGSVVSTALPTIARALEASENYVWVVNVYYLSKYETWLTYLLRFSSAAFQPIYGQLADLWGRRWLTIGAVVIFTVGSGICGGATSIDMLIGGRAIQGLGSAGINMLVELILCDLLPLRERGQFFGIIFMFVILGSVIGPFLGGILVDRVSWRWVFYINIPFSGVCVVLLFFFLHIKNAGTGNFIDKVKRIDFFGNFLLAASVGSCLFALTYGDTRYPFSDTRIIVSLVLGLLGHVAFMFFEASPWCKEPVMPMVLFKNRTSAGAYIATFLQTLVSFWVLYFLPLYFQSTQLVSATRSGVMLLPFSVVYALSSLAGGALTTKLGRFRNIHFASFALMTIGMGTLTILNRSTSLAVIVVLEMIVALAIGVPTANLLTAIQAALPDELNALSTGTFAFLRSVGTIWGVSIPAAIFNNRFDQLLPELSDPTAVRALQRGGAYQQATSEFVDSFPSDVRDVIISIYERSLERVWQIGIVFAGVGFLVIFLERDLKLGTQKKTEDIEINDIPQTAADNSASRPNTINDTASQAPILKQRRSTNQERETV.

The interval M1–D33 is disordered. 7 helical membrane-spanning segments follow: residues F43–V63, W123–T143, G156–L176, I185–V205, W212–L232, F251–G271, and I282–S302. N317 carries N-linked (GlcNAc...) asparagine glycosylation. 6 helical membrane passes run I325–F345, G357–L377, N386–N406, S410–A430, T451–F471, and L524–L544. Over residues I564–Q585 the composition is skewed to polar residues. The segment at I564–V602 is disordered. Residue N580 is glycosylated (N-linked (GlcNAc...) asparagine).

This sequence belongs to the major facilitator superfamily.

Its subcellular location is the cell membrane. Its function is as follows. MFS-type efflux transporter; part of the gene cluster that mediates the biosynthesis of the mycotoxin pyrichalasin H, a tyrosine-derived cytochalasan that inhibits the growth of rice seedlings, but also inhibits lymphocyte capping and actin polymerization and alters cell morphology. Pyrichalasin H is indicated as the responsible agent for the genus-specific pathogenicity of M.grisea toward crabgrass. PyiT might be involved in the excretion of pyrichalasin H. This chain is MFS-type efflux transporter pyiT, found in Pyricularia grisea (Crabgrass-specific blast fungus).